The following is a 97-amino-acid chain: Small ribosomal subunit protein eS25 (97 aa).

Positions 1–24 are disordered; the sequence is MAPAASGAKKQKKKWSKGKVKDKA. A compositionally biased stretch (basic residues) spans 9-18; the sequence is KKQKKKWSKG.

The protein belongs to the eukaryotic ribosomal protein eS25 family. In terms of assembly, component of the small ribosomal subunit (SSU). Mature N.crassa ribosomes consist of a small (40S) and a large (60S) subunit. The 40S small subunit contains 1 molecule of ribosomal RNA (18S rRNA) and at least 32 different proteins. The large 60S subunit contains 3 rRNA molecules (26S, 5.8S and 5S rRNA) and at least 42 different proteins.

The protein resides in the cytoplasm. In terms of biological role, component of the ribosome, a large ribonucleoprotein complex responsible for the synthesis of proteins in the cell. The small ribosomal subunit (SSU) binds messenger RNAs (mRNAs) and translates the encoded message by selecting cognate aminoacyl-transfer RNA (tRNA) molecules. The large subunit (LSU) contains the ribosomal catalytic site termed the peptidyl transferase center (PTC), which catalyzes the formation of peptide bonds, thereby polymerizing the amino acids delivered by tRNAs into a polypeptide chain. The nascent polypeptides leave the ribosome through a tunnel in the LSU and interact with protein factors that function in enzymatic processing, targeting, and the membrane insertion of nascent chains at the exit of the ribosomal tunnel. This is Small ribosomal subunit protein eS25 (rps-25) from Neurospora crassa (strain ATCC 24698 / 74-OR23-1A / CBS 708.71 / DSM 1257 / FGSC 987).